We begin with the raw amino-acid sequence, 81 residues long: Insect-toxin Cn10 (81 aa).

Positions 1–13 (ITACLVLIGTVCA) are cleaved as a signal peptide. Positions 14-79 (KEGYLVNKST…TYPIPGKTCR (66 aa)) constitute an LCN-type CS-alpha/beta domain. 4 cysteine pairs are disulfide-bonded: Cys25–Cys78, Cys29–Cys54, Cys38–Cys59, and Cys42–Cys61. Residue Lys81 is a propeptide, removed by a carboxypeptidase.

The protein belongs to the long (4 C-C) scorpion toxin superfamily. Sodium channel inhibitor family. Beta subfamily. As to expression, expressed by the venom gland.

It is found in the secreted. Functionally, beta toxins bind voltage-independently at site-4 of sodium channels (Nav) and shift the voltage of activation toward more negative potentials thereby affecting sodium channel activation and promoting spontaneous and repetitive firing. Is toxic on insects and crustaceans, but not on mammals. The sequence is that of Insect-toxin Cn10 from Centruroides noxius (Mexican scorpion).